The sequence spans 290 residues: Small ribosomal subunit biogenesis GTPase RsgA (290 aa).

The CP-type G domain occupies 62–213 (KNSLVRPPIV…IADTPGFSSL (152 aa)). Residues 111 to 114 (SKLD) and 156 to 164 (GQTGVGKST) contribute to the GTP site. Zn(2+) contacts are provided by C237, C242, H244, and C250.

It belongs to the TRAFAC class YlqF/YawG GTPase family. RsgA subfamily. Monomer. Associates with 30S ribosomal subunit, binds 16S rRNA. Zn(2+) serves as cofactor.

It localises to the cytoplasm. Its function is as follows. One of several proteins that assist in the late maturation steps of the functional core of the 30S ribosomal subunit. Helps release RbfA from mature subunits. May play a role in the assembly of ribosomal proteins into the subunit. Circularly permuted GTPase that catalyzes slow GTP hydrolysis, GTPase activity is stimulated by the 30S ribosomal subunit. This Streptococcus agalactiae serotype V (strain ATCC BAA-611 / 2603 V/R) protein is Small ribosomal subunit biogenesis GTPase RsgA.